The chain runs to 118 residues: Small ribosomal subunit protein uS12cz/uS12cy (118 aa).

The protein belongs to the universal ribosomal protein uS12 family. As to quaternary structure, part of the 30S ribosomal subunit.

The protein localises to the plastid. Its subcellular location is the chloroplast. In terms of biological role, with S4 and S5 plays an important role in translational accuracy. Located at the interface of the 30S and 50S subunits. The protein is Small ribosomal subunit protein uS12cz/uS12cy (rps12-A) of Helianthus annuus (Common sunflower).